A 485-amino-acid chain; its full sequence is MLKDPKQVHAPNFGVVVSVRGSVVDIRFDESLPPIHRLLRVVGIFIVIEVLAQRDARVVRGIALTPTQGLARGMRVEDSGGPLTAPVGKAIISRMFDVFGNTIDNGPLLNNVQWRSVHRAPPTLSQRSTQSEIFVTGIKVIDVLVPLERGGKAGLFGGAGVGKTVLLTEMIHNMVSHHNGISIFCGIGERSREGEELYREMKEAGVLPNMVMIFGQMNEPPGARFRVGHAALTMAEYFRDDESRDVLLLIDNIFRFIQAGSEISGLMGQMPSRLGYQPTMGSELSSLEERIANTEDGAITSIQAVYVPADDFTDPAAVHTFSHLSASIVLSRQRASEGLYPSIDPLQSSSKMATAGIIGERHYNLAQEVRRTLAKYDDLKDIIAMLGLEQLNVDDRKLVGRARRLERFFTQPFFSTEQFSTMEGKLVSLDDALDGCERILADEFADYPESALYMIGAVDEVKINNKAAQHTKQQKEKNNGSTDVN.

157 to 164 (GGAGVGKT) contacts ATP.

Belongs to the ATPase alpha/beta chains family. As to quaternary structure, F-type ATPases have 2 components, CF(1) - the catalytic core - and CF(0) - the membrane proton channel. CF(1) has five subunits: alpha(3), beta(3), gamma(1), delta(1), epsilon(1). CF(0) has three main subunits: a(1), b(2) and c(9-12). The alpha and beta chains form an alternating ring which encloses part of the gamma chain. CF(1) is attached to CF(0) by a central stalk formed by the gamma and epsilon chains, while a peripheral stalk is formed by the delta and b chains.

The protein resides in the cell inner membrane. The enzyme catalyses ATP + H2O + 4 H(+)(in) = ADP + phosphate + 5 H(+)(out). In terms of biological role, produces ATP from ADP in the presence of a proton gradient across the membrane. The catalytic sites are hosted primarily by the beta subunits. This is ATP synthase subunit beta 1 from Psychromonas ingrahamii (strain DSM 17664 / CCUG 51855 / 37).